Consider the following 394-residue polypeptide: S-adenosylmethionine synthase 3 (394 aa).

Glutamate 11 contacts Mg(2+). Residue histidine 17 coordinates ATP. Glutamate 45 serves as a coordination point for K(+). 2 residues coordinate L-methionine: glutamate 58 and glutamine 101. ATP contacts are provided by residues 169-171 (DGK), 237-240 (SGRF), aspartate 248, 254-255 (RK), alanine 271, lysine 275, and lysine 279. Aspartate 248 is a binding site for L-methionine. Position 279 (lysine 279) interacts with L-methionine.

It belongs to the AdoMet synthase family. Homotetramer. It depends on Mn(2+) as a cofactor. Mg(2+) is required as a cofactor. Co(2+) serves as cofactor. Requires K(+) as cofactor.

The protein localises to the cytoplasm. The catalysed reaction is L-methionine + ATP + H2O = S-adenosyl-L-methionine + phosphate + diphosphate. Its pathway is amino-acid biosynthesis; S-adenosyl-L-methionine biosynthesis; S-adenosyl-L-methionine from L-methionine: step 1/1. In terms of biological role, catalyzes the formation of S-adenosylmethionine from methionine and ATP. The reaction comprises two steps that are both catalyzed by the same enzyme: formation of S-adenosylmethionine (AdoMet) and triphosphate, and subsequent hydrolysis of the triphosphate. This is S-adenosylmethionine synthase 3 (SAM3) from Hordeum vulgare (Barley).